Here is a 288-residue protein sequence, read N- to C-terminus: Transmembrane and coiled-coil domain-containing protein 5A (288 aa).

Residues 10–189 adopt a coiled-coil conformation; that stretch reads KKNIISLNMD…ELETGYLERE (180 aa). A helical transmembrane segment spans residues 227–249; sequence SLLFSTLFFIRLLGYLIFHLSFI.

Belongs to the TMCO5 family. Only detected in testis (at protein level).

The protein localises to the endoplasmic reticulum membrane. It is found in the nucleus membrane. The sequence is that of Transmembrane and coiled-coil domain-containing protein 5A (Tmco5a) from Mus musculus (Mouse).